A 75-amino-acid chain; its full sequence is UPF0729 protein C18orf32 homolog (75 aa).

A necessary for its localzation to the endoplasmic reticulum and lipid droplets region spans residues 1–37; the sequence is MVCIPCIVIPVLLWVYKRFLEPVLYPIISPIISRFWR. A compositionally biased stretch (polar residues) spans 43–65; that stretch reads DTPQQKTSTAECNGAANGSTANG. Residues 43–75 are disordered; that stretch reads DTPQQKTSTAECNGAANGSTANGPKTVADKKAD.

The protein belongs to the UPF0729 family.

It is found in the endoplasmic reticulum. It localises to the lipid droplet. This Danio rerio (Zebrafish) protein is UPF0729 protein C18orf32 homolog.